A 381-amino-acid polypeptide reads, in one-letter code: Pectin lyase 1 (381 aa).

The N-terminal stretch at 1–20 (MKYASFIAAAAAALASAVSA) is a signal peptide. 2 disulfide bridges follow: cysteine 83–cysteine 102 and cysteine 92–cysteine 227. A glycan (N-linked (GlcNAc...) asparagine) is linked at asparagine 130. Residue arginine 257 is part of the active site. A disulfide bridge links cysteine 324 with cysteine 332.

Belongs to the polysaccharide lyase 1 family.

It is found in the secreted. The enzyme catalyses Eliminative cleavage of (1-&gt;4)-alpha-D-galacturonan methyl ester to give oligosaccharides with 4-deoxy-6-O-methyl-alpha-D-galact-4-enuronosyl groups at their non-reducing ends.. Functionally, pectinolytic enzymes consist of four classes of enzymes: pectin lyase, polygalacturonase, pectin methylesterase and rhamnogalacturonase. Among pectinolytic enzymes, pectin lyase is the most important in depolymerization of pectin, since it cleaves internal glycosidic bonds of highly methylated pectins. This chain is Pectin lyase 1 (pel1), found in Aspergillus oryzae (strain ATCC 42149 / RIB 40) (Yellow koji mold).